A 666-amino-acid chain; its full sequence is Calpain-10 (666 aa).

The 309-residue stretch at 13 to 321 (LFRDAAFPAS…FDEVTIGYPV (309 aa)) folds into the Calpain catalytic domain. Active-site residues include Cys-73, His-238, and Asn-263. Domain III regions lie at residues 322–488 (TEAG…ISLS) and 507–648 (EWET…IHSQ).

It belongs to the peptidase C2 family.

Its function is as follows. Calcium-regulated non-lysosomal thiol-protease which catalyzes limited proteolysis of substrates involved in cytoskeletal remodeling and signal transduction. May play a role in insulin-stimulated glucose uptake. The chain is Calpain-10 (Capn10) from Mus musculus (Mouse).